Here is a 341-residue protein sequence, read N- to C-terminus: Biotin synthase (341 aa).

Residues 40 to 267 (AEIQVSTLLS…RSMVRLSAGR (228 aa)) enclose the Radical SAM core domain. 3 residues coordinate [4Fe-4S] cluster: Cys55, Cys59, and Cys62. [2Fe-2S] cluster is bound by residues Cys99, Cys130, Cys190, and Arg262.

This sequence belongs to the radical SAM superfamily. Biotin synthase family. In terms of assembly, homodimer. Requires [4Fe-4S] cluster as cofactor. [2Fe-2S] cluster serves as cofactor.

It catalyses the reaction (4R,5S)-dethiobiotin + (sulfur carrier)-SH + 2 reduced [2Fe-2S]-[ferredoxin] + 2 S-adenosyl-L-methionine = (sulfur carrier)-H + biotin + 2 5'-deoxyadenosine + 2 L-methionine + 2 oxidized [2Fe-2S]-[ferredoxin]. It functions in the pathway cofactor biosynthesis; biotin biosynthesis; biotin from 7,8-diaminononanoate: step 2/2. Its function is as follows. Catalyzes the conversion of dethiobiotin (DTB) to biotin by the insertion of a sulfur atom into dethiobiotin via a radical-based mechanism. This chain is Biotin synthase, found in Xylella fastidiosa (strain M23).